Reading from the N-terminus, the 213-residue chain is Histidine biosynthesis bifunctional protein HisIE (213 aa).

The segment at 1–114 (MLTTEKYQGL…FHPALTDFSF (114 aa)) is phosphoribosyl-AMP cyclohydrolase. The tract at residues 115–213 (LFQLENIISI…RVRSKLKKKH (99 aa)) is phosphoribosyl-ATP pyrophosphohydrolase.

This sequence in the N-terminal section; belongs to the PRA-CH family. In the C-terminal section; belongs to the PRA-PH family.

It is found in the cytoplasm. It catalyses the reaction 1-(5-phospho-beta-D-ribosyl)-ATP + H2O = 1-(5-phospho-beta-D-ribosyl)-5'-AMP + diphosphate + H(+). The catalysed reaction is 1-(5-phospho-beta-D-ribosyl)-5'-AMP + H2O = 1-(5-phospho-beta-D-ribosyl)-5-[(5-phospho-beta-D-ribosylamino)methylideneamino]imidazole-4-carboxamide. Its pathway is amino-acid biosynthesis; L-histidine biosynthesis; L-histidine from 5-phospho-alpha-D-ribose 1-diphosphate: step 2/9. The protein operates within amino-acid biosynthesis; L-histidine biosynthesis; L-histidine from 5-phospho-alpha-D-ribose 1-diphosphate: step 3/9. This is Histidine biosynthesis bifunctional protein HisIE from Blochmanniella floridana.